A 300-amino-acid polypeptide reads, in one-letter code: Secreted mono- and diacylglycerol lipase LIP4 (300 aa).

An N-terminal signal peptide occupies residues 1–16 (MRFLAFLLCLVPLALC). Residues Cys54 and Cys293 are joined by a disulfide bond. Ser167 (nucleophile) is an active-site residue. Asp224 is a catalytic residue.

The protein belongs to the AB hydrolase superfamily. Lipase family. Class 3 subfamily.

The protein localises to the secreted. It catalyses the reaction a monoacylglycerol + H2O = glycerol + a fatty acid + H(+). It carries out the reaction a diacylglycerol + H2O = a monoacylglycerol + a fatty acid + H(+). Its function is as follows. Secreted lipase involved in Dandruff and seborrheic dermatitis (D/SD) probably via lipase-mediated breakdown of sebaceous lipids and release of irritating free fatty acids. Shows activity against monoglyceride and diglyceride substrates. Due to an absence of fatty acid synthase genes in Malassezia species, secretory lipases are essential for the yeast to generate free fatty acids from degradation of sebum and assimilate them as lipid sources for growth. Plays an essential role at the pathogen-host interface during disease progression. The polypeptide is Secreted mono- and diacylglycerol lipase LIP4 (Malassezia restricta (Seborrheic dermatitis infection agent)).